A 100-amino-acid polypeptide reads, in one-letter code: Large ribosomal subunit protein uL23 (100 aa).

This sequence belongs to the universal ribosomal protein uL23 family. Part of the 50S ribosomal subunit. Contacts protein L29, and trigger factor when it is bound to the ribosome.

Functionally, one of the early assembly proteins it binds 23S rRNA. One of the proteins that surrounds the polypeptide exit tunnel on the outside of the ribosome. Forms the main docking site for trigger factor binding to the ribosome. This Yersinia pestis bv. Antiqua (strain Antiqua) protein is Large ribosomal subunit protein uL23.